We begin with the raw amino-acid sequence, 449 residues long: Probable glycine dehydrogenase (decarboxylating) subunit 1 (449 aa).

The protein belongs to the GcvP family. N-terminal subunit subfamily. As to quaternary structure, the glycine cleavage system is composed of four proteins: P, T, L and H. In this organism, the P 'protein' is a heterodimer of two subunits.

It catalyses the reaction N(6)-[(R)-lipoyl]-L-lysyl-[glycine-cleavage complex H protein] + glycine + H(+) = N(6)-[(R)-S(8)-aminomethyldihydrolipoyl]-L-lysyl-[glycine-cleavage complex H protein] + CO2. Functionally, the glycine cleavage system catalyzes the degradation of glycine. The P protein binds the alpha-amino group of glycine through its pyridoxal phosphate cofactor; CO(2) is released and the remaining methylamine moiety is then transferred to the lipoamide cofactor of the H protein. This is Probable glycine dehydrogenase (decarboxylating) subunit 1 from Pyrococcus abyssi (strain GE5 / Orsay).